The sequence spans 311 residues: Ribosomal RNA small subunit methyltransferase H (311 aa).

Residues 32–34 (AGH), Asp-52, Phe-79, Asp-100, and Gln-107 each bind S-adenosyl-L-methionine.

This sequence belongs to the methyltransferase superfamily. RsmH family.

The protein localises to the cytoplasm. It catalyses the reaction cytidine(1402) in 16S rRNA + S-adenosyl-L-methionine = N(4)-methylcytidine(1402) in 16S rRNA + S-adenosyl-L-homocysteine + H(+). Functionally, specifically methylates the N4 position of cytidine in position 1402 (C1402) of 16S rRNA. In Staphylococcus haemolyticus (strain JCSC1435), this protein is Ribosomal RNA small subunit methyltransferase H.